We begin with the raw amino-acid sequence, 306 residues long: tRNA dimethylallyltransferase (306 aa).

14 to 21 lines the ATP pocket; it reads GPTAAGKS. Residue 16–21 participates in substrate binding; the sequence is TAAGKS. The interaction with substrate tRNA stretch occupies residues 39 to 42; that stretch reads DSRL.

The protein belongs to the IPP transferase family. Monomer. The cofactor is Mg(2+).

It carries out the reaction adenosine(37) in tRNA + dimethylallyl diphosphate = N(6)-dimethylallyladenosine(37) in tRNA + diphosphate. Functionally, catalyzes the transfer of a dimethylallyl group onto the adenine at position 37 in tRNAs that read codons beginning with uridine, leading to the formation of N6-(dimethylallyl)adenosine (i(6)A). The protein is tRNA dimethylallyltransferase of Synechococcus elongatus (strain ATCC 33912 / PCC 7942 / FACHB-805) (Anacystis nidulans R2).